Reading from the N-terminus, the 147-residue chain is Biogenesis of lysosome-related organelles complex 1 subunit 1 (147 aa).

Disordered stretches follow at residues 1-25 and 125-147; these read MLTS…VRRK and SSGA…PSAT.

This sequence belongs to the BLOC1S1 family. As to quaternary structure, component of the biogenesis of lysosome-related organelles complex-1 (BLOC-1) composed of Blos1, Blos2, Blos3, Blos4, Dysb, Muted, Pldn and Snapin. Interacts with Pldn.

Functionally, component of the biogenesis of lysosome-related organelles complex-1 (BLOC-1) involved in pigment granule biogenesis and membrane trafficking in synapses. In response to high synaptic activity at neuromuscular junctions, stabilizes Pldn protein levels and, together with Pldn, plays a role in promoting efficient synaptic vesicle recycling and re-formation through early endosomes. The chain is Biogenesis of lysosome-related organelles complex 1 subunit 1 from Drosophila melanogaster (Fruit fly).